The primary structure comprises 386 residues: Arginine biosynthesis bifunctional protein ArgJ (386 aa).

Substrate contacts are provided by threonine 148, lysine 170, threonine 181, glutamate 261, asparagine 381, and serine 386. The active-site Nucleophile is threonine 181.

The protein belongs to the ArgJ family. Heterotetramer of two alpha and two beta chains.

It is found in the cytoplasm. The enzyme catalyses N(2)-acetyl-L-ornithine + L-glutamate = N-acetyl-L-glutamate + L-ornithine. It catalyses the reaction L-glutamate + acetyl-CoA = N-acetyl-L-glutamate + CoA + H(+). Its pathway is amino-acid biosynthesis; L-arginine biosynthesis; L-ornithine and N-acetyl-L-glutamate from L-glutamate and N(2)-acetyl-L-ornithine (cyclic): step 1/1. It functions in the pathway amino-acid biosynthesis; L-arginine biosynthesis; N(2)-acetyl-L-ornithine from L-glutamate: step 1/4. In terms of biological role, catalyzes two activities which are involved in the cyclic version of arginine biosynthesis: the synthesis of N-acetylglutamate from glutamate and acetyl-CoA as the acetyl donor, and of ornithine by transacetylation between N(2)-acetylornithine and glutamate. The polypeptide is Arginine biosynthesis bifunctional protein ArgJ (Corynebacterium diphtheriae (strain ATCC 700971 / NCTC 13129 / Biotype gravis)).